Here is a 282-residue protein sequence, read N- to C-terminus: Urease accessory protein UreD (282 aa).

This sequence belongs to the UreD family. In terms of assembly, ureD, UreF and UreG form a complex that acts as a GTP-hydrolysis-dependent molecular chaperone, activating the urease apoprotein by helping to assemble the nickel containing metallocenter of UreC. The UreE protein probably delivers the nickel.

Its subcellular location is the cytoplasm. Functionally, required for maturation of urease via the functional incorporation of the urease nickel metallocenter. This Methylobacterium sp. (strain 4-46) protein is Urease accessory protein UreD.